The chain runs to 308 residues: Pseudouridine-5'-phosphate glycosidase (308 aa).

Residue Glu-26 is the Proton donor of the active site. Lys-87 and Val-107 together coordinate substrate. Asp-139 contributes to the Mn(2+) binding site. 141 to 143 lines the substrate pocket; sequence SAD. Lys-160 acts as the Nucleophile in catalysis.

It belongs to the pseudouridine-5'-phosphate glycosidase family. In terms of assembly, homotrimer. Mn(2+) serves as cofactor.

It carries out the reaction D-ribose 5-phosphate + uracil = psi-UMP + H2O. Catalyzes the reversible cleavage of pseudouridine 5'-phosphate (PsiMP) to ribose 5-phosphate and uracil. Functions biologically in the cleavage direction, as part of a pseudouridine degradation pathway. In Legionella pneumophila subsp. pneumophila (strain Philadelphia 1 / ATCC 33152 / DSM 7513), this protein is Pseudouridine-5'-phosphate glycosidase.